Here is a 942-residue protein sequence, read N- to C-terminus: Leucine--tRNA ligase 2 (942 aa).

The 'HIGH' region signature appears at 35 to 45 (PYPNSPFHLGH). A 'KMSKS' region motif is present at residues 619–623 (KMSKS). K622 serves as a coordination point for ATP.

Belongs to the class-I aminoacyl-tRNA synthetase family.

It is found in the cytoplasm. The enzyme catalyses tRNA(Leu) + L-leucine + ATP = L-leucyl-tRNA(Leu) + AMP + diphosphate. This Sulfolobus acidocaldarius (strain ATCC 33909 / DSM 639 / JCM 8929 / NBRC 15157 / NCIMB 11770) protein is Leucine--tRNA ligase 2.